We begin with the raw amino-acid sequence, 459 residues long: Carbonic anhydrase 9 (459 aa).

The first 37 residues, 1-37 (MAPLCPSPWLPLLIPAPAPGLTVQLLLSLLLLVPVHP), serve as a signal peptide directing secretion. A proteoglycan-like (PG) region spans residues 38-112 (QRLPRMQEDS…EEEGSLKLED (75 aa)). Topologically, residues 38–414 (QRLPRMQEDS…QLNSCLAAGD (377 aa)) are extracellular. A disordered region spans residues 42-154 (RMQEDSPLGG…GDPPWPRVSP (113 aa)). The segment covering 55–95 (GEDDPLGEEDLPSEEDSPREEDPPGEEDLPGEEDLPGEEDL) has biased composition (acidic residues). Residues 96–112 (PEVKPKSEEEGSLKLED) show a composition bias toward basic and acidic residues. Thr-115 is a glycosylation site (O-linked (GlcNAc...) threonine). Residues 129–140 (AHRDKEGDDQSH) show a composition bias toward basic and acidic residues. The segment at 138 to 391 (QSHWRYGGDP…NGRVIEASFP (254 aa)) is catalytic. Positions 139–390 (SHWRYGGDPP…LNGRVIEASF (252 aa)) constitute an Alpha-carbonic anhydrase domain. The cysteines at positions 156 and 336 are disulfide-linked. His-200 acts as the Proton donor/acceptor in catalysis. 3 residues coordinate Zn(2+): His-226, His-228, and His-251. 332–333 (TT) contributes to the substrate binding site. N-linked (GlcNAc...) asparagine glycosylation occurs at Asn-346. The helical transmembrane segment at 415–435 (ILALVFGLLFAVTSVAFLVQM) threads the bilayer. Residues 436–459 (RRQHRRGTKGGVSYRPAEVAETGA) lie on the Cytoplasmic side of the membrane. Tyr-449 carries the post-translational modification Phosphotyrosine.

It belongs to the alpha-carbonic anhydrase family. Forms oligomers linked by disulfide bonds. Requires Zn(2+) as cofactor. Asn-346 bears high-mannose type glycan structures. As to expression, expressed primarily in carcinoma cells lines. Expression is restricted to very few normal tissues and the most abundant expression is found in the epithelial cells of gastric mucosa.

It localises to the nucleus. Its subcellular location is the nucleolus. The protein resides in the cell membrane. It is found in the cell projection. The protein localises to the microvillus membrane. The catalysed reaction is hydrogencarbonate + H(+) = CO2 + H2O. Inhibited by coumarins, saccharin, sulfonamide derivatives such as acetazolamide (AZA) and Foscarnet (phosphonoformate trisodium salt). In terms of biological role, catalyzes the interconversion between carbon dioxide and water and the dissociated ions of carbonic acid (i.e. bicarbonate and hydrogen ions). The chain is Carbonic anhydrase 9 (CA9) from Homo sapiens (Human).